Here is a 225-residue protein sequence, read N- to C-terminus: Protein GrpE (225 aa).

2 disordered regions span residues 1–44 and 183–225; these read MTEE…ENAG and VAVA…PDEG.

Belongs to the GrpE family. In terms of assembly, homodimer.

It localises to the cytoplasm. Its function is as follows. Participates actively in the response to hyperosmotic and heat shock by preventing the aggregation of stress-denatured proteins, in association with DnaK and GrpE. It is the nucleotide exchange factor for DnaK and may function as a thermosensor. Unfolded proteins bind initially to DnaJ; upon interaction with the DnaJ-bound protein, DnaK hydrolyzes its bound ATP, resulting in the formation of a stable complex. GrpE releases ADP from DnaK; ATP binding to DnaK triggers the release of the substrate protein, thus completing the reaction cycle. Several rounds of ATP-dependent interactions between DnaJ, DnaK and GrpE are required for fully efficient folding. In Streptomyces coelicolor (strain ATCC BAA-471 / A3(2) / M145), this protein is Protein GrpE.